Here is a 275-residue protein sequence, read N- to C-terminus: Light-independent protochlorophyllide reductase iron-sulfur ATP-binding protein (275 aa).

ATP-binding positions include 12-17 (GIGKST) and Lys41. Mg(2+) is bound at residue Ser16. [4Fe-4S] cluster-binding residues include Cys97 and Cys131. 182–183 (NR) is a binding site for ATP.

The protein belongs to the NifH/BchL/ChlL family. As to quaternary structure, homodimer. Protochlorophyllide reductase is composed of three subunits; BchL, BchN and BchB. It depends on [4Fe-4S] cluster as a cofactor.

The enzyme catalyses chlorophyllide a + oxidized 2[4Fe-4S]-[ferredoxin] + 2 ADP + 2 phosphate = protochlorophyllide a + reduced 2[4Fe-4S]-[ferredoxin] + 2 ATP + 2 H2O. Its pathway is porphyrin-containing compound metabolism; bacteriochlorophyll biosynthesis (light-independent). Its function is as follows. Component of the dark-operative protochlorophyllide reductase (DPOR) that uses Mg-ATP and reduced ferredoxin to reduce ring D of protochlorophyllide (Pchlide) to form chlorophyllide a (Chlide). This reaction is light-independent. The L component serves as a unique electron donor to the NB-component of the complex, and binds Mg-ATP. The polypeptide is Light-independent protochlorophyllide reductase iron-sulfur ATP-binding protein (Prosthecochloris aestuarii (strain DSM 271 / SK 413)).